Consider the following 221-residue polypeptide: Uracil-DNA glycosylase (221 aa).

Aspartate 65 acts as the Proton acceptor in catalysis.

This sequence belongs to the uracil-DNA glycosylase (UDG) superfamily. UNG family.

It localises to the cytoplasm. The catalysed reaction is Hydrolyzes single-stranded DNA or mismatched double-stranded DNA and polynucleotides, releasing free uracil.. Functionally, excises uracil residues from the DNA which can arise as a result of misincorporation of dUMP residues by DNA polymerase or due to deamination of cytosine. This chain is Uracil-DNA glycosylase, found in Christiangramia forsetii (strain DSM 17595 / CGMCC 1.15422 / KT0803) (Gramella forsetii).